A 341-amino-acid chain; its full sequence is Major histocompatibility complex class I-related protein 1 (341 aa).

A signal peptide spans 1-22 (MGELMAFLLPLIIVLMVKHSDS). The interval 23 to 109 (RTHSLRYFRL…KRLQRHYNHS (87 aa)) is alpha-1. The tract at residues 23–201 (RTHSLRYFRL…EYGKDILQRT (179 aa)) is antigen-binding cleft. Residues 23-302 (RTHSLRYFRL…QESETIPLVM (280 aa)) lie on the Extracellular side of the membrane. 8-(9H-purin-6-yl)-2-oxa-8-azabicyclo[3.3.1]nona-3,6-diene-4,6-dicarbaldehyde contacts are provided by tyrosine 29 and arginine 31. Residues arginine 31, serine 46, and lysine 65 each contribute to the 5-(2-oxoethylideneamino)-6-(D-ribitylamino)uracil site. Arginine 31, serine 46, and lysine 65 together coordinate 5-(2-oxopropylideneamino)-6-(D-ribitylamino)uracil. 3 residues coordinate 7-hydroxy-6-methyl-8-(1-D-ribityl)lumazine: arginine 31, serine 46, and lysine 65. 8-(9H-purin-6-yl)-2-oxa-8-azabicyclo[3.3.1]nona-3,6-diene-4,6-dicarbaldehyde contacts are provided by lysine 65 and histidine 80. Lysine 65 is a binding site for 2-amino-4-oxopteridine-6-carbaldehyde. Pyridoxal is bound at residue lysine 65. A glycan (N-linked (GlcNAc...) asparagine) is linked at asparagine 107. The tract at residues 110–201 (GSHTYQRMIG…EYGKDILQRT (92 aa)) is alpha-2. Residue arginine 116 participates in 8-(9H-purin-6-yl)-2-oxa-8-azabicyclo[3.3.1]nona-3,6-diene-4,6-dicarbaldehyde binding. Positions 116, 174, and 175 each coordinate 5-(2-oxoethylideneamino)-6-(D-ribitylamino)uracil. Positions 116, 174, and 175 each coordinate 5-(2-oxopropylideneamino)-6-(D-ribitylamino)uracil. The 7-hydroxy-6-methyl-8-(1-D-ribityl)lumazine site is built by arginine 116, tyrosine 174, and glutamine 175. 2 disulfides stabilise this stretch: cysteine 120/cysteine 183 and cysteine 222/cysteine 278. Positions 202-293 (EPPLVRVNRK…GVHMVLQVPQ (92 aa)) are alpha-3. The Ig-like C1-type domain occupies 203-299 (PPLVRVNRKE…QVPQESETIP (97 aa)). The interval 294–302 (ESETIPLVM) is connecting peptide. Residues 303-323 (KAVSGSIVLVIVLAGVGVLVW) traverse the membrane as a helical segment. Residues 324–341 (RRRPREQNGAIYLPTPDR) lie on the Cytoplasmic side of the membrane.

This sequence belongs to the MHC class I family. In terms of assembly, heterotrimer that consists of MR1, B2M and metabolite antigen. Major classes of metabolite ligands presented by MR1 include riboflavin-related antigens, pyrimidines and ribityl lumazines, nucleobase adducts and folate derivatives. Forms reversible covalent Schiff base complexes with microbial pyrimidine-based metabolite, which serves as a molecular switch triggering complete folding, stable association with B2M and translocation of the ternary complex from endoplasmic reticulum to the plasma membrane. Alternatively, forms non-Schiff base complexes with ribityl lumazines. On antigen-presenting cells, the ternary complex interacts with TCR on MR1-restricted T cells. Interacts with TAPBP and TAPBPL chaperones in the endoplasmic reticulum. TAPBP associated or not with MHC class I peptide loading complex binds ligand-free MR1 or MR1-B2M complex, providing for stable MR1 pools ready for metabolite antigen processing. TAPBPL interacts with MR1 in a ligand-independent way; this interaction may stabilize MR1 pool and facilitate ligand loading and dissociation. Structurally, MR1-B2M heterodimer adopts a topology similar to classical MHC class I molecules, with alpha-1 and alpha-2 domains of MR1 forming the antigen-binding cleft composed of two alpha-helices resting on a floor of 7-stranded anti-parallel beta-pleated sheet. MR1-B2M heterodimer (via alpha-helices) interacts with TCR (via CDR domains). Post-translationally, N-glycosylated.

The protein localises to the cell membrane. Its subcellular location is the endoplasmic reticulum membrane. It is found in the golgi apparatus membrane. The protein resides in the early endosome membrane. It localises to the late endosome membrane. Its function is as follows. Antigen-presenting molecule specialized in displaying microbial pyrimidine-based metabolites to alpha-beta T cell receptors (TCR) on innate-type mucosal-associated invariant T (MAIT) cells. In complex with B2M preferentially presents riboflavin-derived metabolites to semi-invariant TCRs on MAIT cells, guiding immune surveillance of the microbial metabolome at mucosal epithelial barriers. Signature pyrimidine-based microbial antigens are generated via non-enzymatic condensation of metabolite intermediates of the riboflavin pathway with by-products arising from other metabolic pathways such as glycolysis. Typical potent antigenic metabolites are 5-(2-oxoethylideneamino)-6-D-ribitylaminouracil (5-OE-RU) and 5-(2-oxopropylideneamino)-6-D-ribitylaminouracil (5-OP-RU), products of condensation of 5-amino-6-D-ribityaminouracil (5-A-RU) with glyoxal or methylglyoxal by-products, respectively. May present microbial antigens to various MAIT cell subsets, providing for unique recognition of diverse microbes, including pathogens that do not synthesize riboflavin. Upon antigen recognition, elicits rapid innate-type MAIT cell activation to eliminate pathogenic microbes by directly killing infected cells. During T cell development, drives thymic selection and post-thymic terminal differentiation of MAIT cells in a process dependent on commensal microflora. Acts as an immune sensor of cancer cell metabolome. May present a tumor-specific or -associated metabolite essential for cancer cell survival to a pan-cancer TCR on a non-MAIT CD8-positive T cell clone, triggering T cell-mediated killing of a wide range of cancer cell types. May present tumor-enriched pyridoxal and pyridoxal 5'-phosphate antigens, enabling preferential recognition of cancer cells. Presents nucleobase carbonyl adducts generated during oxidative stress. Captures M3Ade, a nucleobase adduct composed of one adenine modified by a malondialdehyde trimer, for recognition by MR1-restricted T cell clones expressing a polyclonal TCR repertoire. This is Major histocompatibility complex class I-related protein 1 from Pan troglodytes (Chimpanzee).